The chain runs to 473 residues: Fumarate hydratase class II (473 aa).

Residues Ser-104–Thr-106, His-128–Asp-131, Ser-138–Asn-140, and Thr-186 each bind substrate. His-187 (proton donor/acceptor) is an active-site residue. Residue Ser-318 is part of the active site. Substrate contacts are provided by residues Ser-319 and Lys-324–Asn-326.

It belongs to the class-II fumarase/aspartase family. Fumarase subfamily. In terms of assembly, homotetramer.

The protein localises to the cytoplasm. The enzyme catalyses (S)-malate = fumarate + H2O. It participates in carbohydrate metabolism; tricarboxylic acid cycle; (S)-malate from fumarate: step 1/1. Functionally, involved in the TCA cycle. Catalyzes the stereospecific interconversion of fumarate to L-malate. This chain is Fumarate hydratase class II, found in Corynebacterium efficiens (strain DSM 44549 / YS-314 / AJ 12310 / JCM 11189 / NBRC 100395).